The following is a 195-amino-acid chain: Probable GTP-binding protein EngB (195 aa).

In terms of domain architecture, EngB-type G spans 24–195; the sequence is GLKEVALAGR…MIFNAIEKYL (172 aa). GTP-binding positions include 32 to 39, 59 to 63, 77 to 80, 144 to 147, and 176 to 178; these read GRSNVGKS, GKTQT, DVPG, TKED, and YTA. Mg(2+)-binding residues include Ser39 and Thr61.

It belongs to the TRAFAC class TrmE-Era-EngA-EngB-Septin-like GTPase superfamily. EngB GTPase family. The cofactor is Mg(2+).

Its function is as follows. Necessary for normal cell division and for the maintenance of normal septation. The protein is Probable GTP-binding protein EngB of Macrococcus caseolyticus (strain JCSC5402) (Macrococcoides caseolyticum).